Reading from the N-terminus, the 370-residue chain is Anhydro-N-acetylmuramic acid kinase (370 aa).

Residue 13–20 (GTSMDGVD) coordinates ATP.

It belongs to the anhydro-N-acetylmuramic acid kinase family.

The catalysed reaction is 1,6-anhydro-N-acetyl-beta-muramate + ATP + H2O = N-acetyl-D-muramate 6-phosphate + ADP + H(+). It participates in amino-sugar metabolism; 1,6-anhydro-N-acetylmuramate degradation. Its pathway is cell wall biogenesis; peptidoglycan recycling. Its function is as follows. Catalyzes the specific phosphorylation of 1,6-anhydro-N-acetylmuramic acid (anhMurNAc) with the simultaneous cleavage of the 1,6-anhydro ring, generating MurNAc-6-P. Is required for the utilization of anhMurNAc either imported from the medium or derived from its own cell wall murein, and thus plays a role in cell wall recycling. The polypeptide is Anhydro-N-acetylmuramic acid kinase (Shewanella frigidimarina (strain NCIMB 400)).